A 513-amino-acid chain; its full sequence is MGLLDSKLCMMILAVSVLIIDINFEARIGTFFDLRLRTSYFKKSSSPLLSHTDSEEDLNYLSKHEDKRPVAIVTGSYESAHTGHMMHIREMFEHTGYKIVTKNELSLDTKWDVMWHHEYSFTQEPFKTLIKNASPNQIVNHVPGSGFYTSKVQLATSDLSNGVPKAFQLPAEKSKLLEYAEKNPDVLWVQKDNTHRNIKIKSTNDMDLSKNNSFVQKFVDNPLLIDNKKFDIGIYTVVTSLLPLRVYIYDGDVLIRFCPEDYHPFDANNVDKYVVGDDYTPIWEINSLKKYFNTQKMSFKSTIDSYLGMQGMDTSKIWLQIRNIIGEVFRTQQTKMLMSLQNLKLNPQYFELSRFDFVVDDQLNVFLMEANMSPNLSSGHFKQNQILYEQVLMNIFSLTGISTPITKEADILFKSRTSEQNPLVNSRDINLPLKFCVENKCESCDEAPECQLCGHCMNTETRKILEQTFVENSNRKQMKRIQFDYENHHPLTKEDHLLTLWLSTKCQLDNTWC.

One can recognise a TTL domain in the interval 73-411 (VTGSYESAHT…STPITKEADI (339 aa)). ATP-binding positions include 216–219 (QKFV), Lys229, and Asp231.

Belongs to the tubulin--tyrosine ligase family. Expressed in hypodermis and pharyngeal muscles.

Its function is as follows. Probable polyglutamylase that forms polyglutamate side chains on tubulin. Probably acts when complexed with other proteins. Appears to be dispensable for polar spindle formation in dividing embryonic cells, for cilia-dependent osmotic avoidance and for male mating behavior. Regulates microtubule dynamics in uterine muscle cells. The sequence is that of Probable tubulin polyglutamylase ttll-15 from Caenorhabditis elegans.